The primary structure comprises 951 residues: Autophagy-related protein 9 (951 aa).

A disordered region spans residues 1 to 165 (MMTSNILSRF…APGPSSRADR (165 aa)). Residues 1–239 (MMTSNILSRF…NGIWSILLNR (239 aa)) are Cytoplasmic-facing. A compositionally biased stretch (polar residues) spans 16–33 (SPSVYETLRQQDAESNPS). Over residues 35-54 (VEERAGLEFEDDRRTQFSDR) the composition is skewed to basic and acidic residues. Positions 79 to 94 (FLTQRSPQRTSGTATA) are enriched in polar residues. The segment covering 97-108 (GGRRRKHSRPRW) has biased composition (basic residues). Residues 240–260 (GLSLLTFAFVVGFSTFLTNCI) traverse the membrane as a helical segment. Over 261-288 (DYRNFRGSRKMDDILIQQCTKKMSMSST) the chain is Lumenal. A helical transmembrane segment spans residues 289 to 309 (FLLWLLTVFWIGKAFQYLMDI). The Cytoplasmic portion of the chain corresponds to 310–455 (RRLKHMHDFY…KALSEGLRRR (146 aa)). The stretch at 456–476 (FIFAGIMNIFVAPFIVVYFLM) is an intramembrane region. At 477–542 (HYFFRYFNEY…QFPKDKTVQV (66 aa)) the chain is on the cytoplasmic side. Residues 543–563 (AGFVAFVSGALASVLALVSII) form a helical membrane-spanning segment. The Lumenal portion of the chain corresponds to 564-577 (DPELFLGFEITHDR). The chain crosses the membrane as a helical span at residues 578–598 (TVLFYLGVFGSVWAFARGLVP). Over 599 to 644 (EETNVFDPEFALLEVIDFTHYFPNHWKGRLHSDEVRKEFAVLYQMK) the chain is Cytoplasmic. Residues 645–665 (IVIFLEEILSMIFTPFILWFS) lie within the membrane without spanning it. Residues 666–951 (LPKCSDRLID…DNRGRTTVGI (286 aa)) are Cytoplasmic-facing. The disordered stretch occupies residues 848-897 (SRPVRPITDPIEDDNESPSAEIRRGAVKKSPHTTTGSSGGAIGTSDSNLG).

It belongs to the ATG9 family. Homotrimer; forms a homotrimer with a central pore that forms a path between the two membrane leaflets. Phosphorylated by atg1. Atg1 phosphorylation is required for preautophagosome elongation.

The protein localises to the preautophagosomal structure membrane. The protein resides in the cytoplasmic vesicle membrane. It localises to the golgi apparatus membrane. Its subcellular location is the endoplasmic reticulum membrane. It catalyses the reaction a 1,2-diacyl-sn-glycero-3-phosphocholine(in) = a 1,2-diacyl-sn-glycero-3-phosphocholine(out). The enzyme catalyses a 1,2-diacyl-sn-glycero-3-phospho-L-serine(in) = a 1,2-diacyl-sn-glycero-3-phospho-L-serine(out). It carries out the reaction a 1,2-diacyl-sn-glycero-3-phosphoethanolamine(in) = a 1,2-diacyl-sn-glycero-3-phosphoethanolamine(out). The catalysed reaction is a 1,2-diacyl-sn-glycero-3-phospho-(1D-myo-inositol-3-phosphate)(in) = a 1,2-diacyl-sn-glycero-3-phospho-(1D-myo-inositol-3-phosphate)(out). In terms of biological role, phospholipid scramblase involved in autophagy and cytoplasm to vacuole transport (Cvt) vesicle formation. Cycles between the preautophagosomal structure/phagophore assembly site (PAS) and the cytoplasmic vesicle pool and supplies membrane for the growing autophagosome. Lipid scramblase activity plays a key role in preautophagosomal structure/phagophore assembly by distributing the phospholipids that arrive through atg2 from the cytoplasmic to the luminal leaflet of the bilayer, thereby driving autophagosomal membrane expansion. Required for mitophagy. Also involved in endoplasmic reticulum-specific autophagic process and is essential for the survival of cells subjected to severe ER stress. Different machineries are required for anterograde trafficking to the PAS during either the Cvt pathway or bulk autophagy and for retrograde trafficking. This is Autophagy-related protein 9 (atg9) from Aspergillus oryzae (strain ATCC 42149 / RIB 40) (Yellow koji mold).